Consider the following 294-residue polypeptide: Small ribosomal subunit biogenesis GTPase RsgA (294 aa).

Positions 63–223 constitute a CP-type G domain; sequence KNELLRPPIA…VADTPGFSSL (161 aa). Residues 112–115 and 166–174 each bind GTP; these read SKID and GQSGVGKSS. Zn(2+) contacts are provided by Cys247, Cys252, His254, and Cys260.

This sequence belongs to the TRAFAC class YlqF/YawG GTPase family. RsgA subfamily. Monomer. Associates with 30S ribosomal subunit, binds 16S rRNA. The cofactor is Zn(2+).

The protein resides in the cytoplasm. In terms of biological role, one of several proteins that assist in the late maturation steps of the functional core of the 30S ribosomal subunit. Helps release RbfA from mature subunits. May play a role in the assembly of ribosomal proteins into the subunit. Circularly permuted GTPase that catalyzes slow GTP hydrolysis, GTPase activity is stimulated by the 30S ribosomal subunit. The chain is Small ribosomal subunit biogenesis GTPase RsgA from Halalkalibacterium halodurans (strain ATCC BAA-125 / DSM 18197 / FERM 7344 / JCM 9153 / C-125) (Bacillus halodurans).